The following is a 458-amino-acid chain: Selection and upkeep of intraepithelial T-cells protein 3 (458 aa).

The signal sequence occupies residues 1-24 (MGSIQIIFAAYCVVLCVLQMLVLS). Over 25–237 (SEQFTITGLE…ESISIVLTGD (213 aa)) the chain is Extracellular. One can recognise an Ig-like V-type domain in the interval 26 to 141 (EQFTITGLER…EEHITEVKVT (116 aa)). Disulfide bonds link C49-C123 and C163-C217. Residues 142–231 (ATSSDIKIIM…LLTHQEESIS (90 aa)) form the Ig-like C1-type domain. The N-linked (GlcNAc...) asparagine glycan is linked to N200. The helical transmembrane segment at 238–258 (LFSWKIDWILILSIIACVMIP) threads the bilayer. At 259–283 (YSMTSYLQQHLIHGSCSQRSHHWRK) the chain is on the cytoplasmic side. Residues 284–304 (NAMVCMSSVIAIIGSMLILHL) traverse the membrane as a helical segment. Residues 305–324 (KQRVPISDQHFELDTLYLED) are Extracellular-facing. Residues 325–345 (ISVILCVVIVFNLKLNLLTYY) traverse the membrane as a helical segment. The Cytoplasmic portion of the chain corresponds to 346–359 (RLERKYDGCTPGCK). Residues 360 to 380 (ACFYILKIIIIILPFVFTFGC) form a helical membrane-spanning segment. The Extracellular segment spans residues 381-414 (YNAIFLKYHQLQKKVSIPDPLYYFYTSWLVNMEM). A helical transmembrane segment spans residues 415 to 435 (LGVFLVFFPTFINLIEFSQFI). Over 436–458 (KTVPKPIWLCQENMREDDAIRHR) the chain is Cytoplasmic.

The protein belongs to the SKINT family. Expressed in skin and thymus.

The protein resides in the membrane. May act by engaging a cell surface molecule on immature T-cells in the embryonic thymus. This Mus musculus (Mouse) protein is Selection and upkeep of intraepithelial T-cells protein 3 (Skint3).